A 155-amino-acid chain; its full sequence is Interleukin-2 (155 aa).

An N-terminal signal peptide occupies residues 1–20 (MYKMQLLSCIALMLVLVANS). T24 carries O-linked (GalNAc...) threonine glycosylation. Residues C79 and C127 are joined by a disulfide bond. An N-linked (GlcNAc...) asparagine glycan is attached at N112.

Belongs to the IL-2 family.

Its subcellular location is the secreted. In terms of biological role, cytokine produced by activated CD4-positive helper T-cells and to a lesser extend activated CD8-positive T-cells and natural killer (NK) cells that plays pivotal roles in the immune response and tolerance. Binds to a receptor complex composed of either the high-affinity trimeric IL-2R (IL2RA/CD25, IL2RB/CD122 and IL2RG/CD132) or the low-affinity dimeric IL-2R (IL2RB and IL2RG). Interaction with the receptor leads to oligomerization and conformation changes in the IL-2R subunits resulting in downstream signaling starting with phosphorylation of JAK1 and JAK3. In turn, JAK1 and JAK3 phosphorylate the receptor to form a docking site leading to the phosphorylation of several substrates including STAT5. This process leads to activation of several pathways including STAT, phosphoinositide-3-kinase/PI3K and mitogen-activated protein kinase/MAPK pathways. Functions as a T-cell growth factor and can increase NK-cell cytolytic activity as well. Promotes strong proliferation of activated B-cells and subsequently immunoglobulin production. Plays a pivotal role in regulating the adaptive immune system by controlling the survival and proliferation of regulatory T-cells, which are required for the maintenance of immune tolerance. Moreover, participates in the differentiation and homeostasis of effector T-cell subsets, including Th1, Th2, Th17 as well as memory CD8-positive T-cells. The polypeptide is Interleukin-2 (IL2) (Vulpes vulpes (Red fox)).